Consider the following 546-residue polypeptide: Chaperonin GroEL (546 aa).

ATP-binding positions include 30–33 (TLGP), K51, 87–91 (DGTTT), G415, and D496. The tract at residues 526-546 (PEDKPAPAMPGGMGGMGGMDF) is disordered. Residues 536 to 546 (GGMGGMGGMDF) are compositionally biased toward gly residues.

This sequence belongs to the chaperonin (HSP60) family. In terms of assembly, forms a cylinder of 14 subunits composed of two heptameric rings stacked back-to-back. Interacts with the co-chaperonin GroES.

The protein localises to the cytoplasm. It catalyses the reaction ATP + H2O + a folded polypeptide = ADP + phosphate + an unfolded polypeptide.. Functionally, together with its co-chaperonin GroES, plays an essential role in assisting protein folding. The GroEL-GroES system forms a nano-cage that allows encapsulation of the non-native substrate proteins and provides a physical environment optimized to promote and accelerate protein folding. The sequence is that of Chaperonin GroEL from Zymomonas mobilis subsp. mobilis (strain ATCC 31821 / ZM4 / CP4).